The primary structure comprises 199 residues: Cutinase CUT1 (199 aa).

Residues 1-18 form the signal peptide; sequence MKFTTLATLALGAVSALA. A propeptide spanning residues 19-27 is cleaved from the precursor; that stretch reads APVTELESR. Residue Q28 is modified to Pyrrolidone carboxylic acid. C31 and C105 are disulfide-bonded. Catalysis depends on S116, which acts as the Nucleophile. C164 and C171 are oxidised to a cystine. The active site involves D168. H181 (proton donor/acceptor) is an active-site residue.

This sequence belongs to the cutinase family. The 2 disulfide bonds play a critical role in holding the catalytic residues in juxta-position; reduction of the disulfide bridges results in the complete inactivation of the enzyme.

It catalyses the reaction cutin + H2O = cutin monomers.. Its function is as follows. Catalyzes the hydrolysis of complex carboxylic polyesters found in the cell wall of plants. Degrades cutin, a macromolecule that forms the structure of the plant cuticle. Also degrades suberin, a specialized macromolecule found in the cell wall of various plant tissues. The polypeptide is Cutinase CUT1 (Coprinopsis cinerea (Inky cap fungus)).